A 197-amino-acid polypeptide reads, in one-letter code: Glycerol-3-phosphate acyltransferase (197 aa).

Helical transmembrane passes span 5 to 25 (IYIAALLLGYLFGSIPFGLIL), 54 to 74 (GLAAATLLLDALKGTAAVIIA), 80 to 100 (AEAAMLAALGAFLGHLFPVWL), 112 to 132 (IGVLIGLFWPGAIVFCLLWLA), and 153 to 173 (IFLWWFGHPALASLFAVLTLL).

It belongs to the PlsY family. Probably interacts with PlsX.

It is found in the cell inner membrane. It catalyses the reaction an acyl phosphate + sn-glycerol 3-phosphate = a 1-acyl-sn-glycero-3-phosphate + phosphate. The protein operates within lipid metabolism; phospholipid metabolism. Its function is as follows. Catalyzes the transfer of an acyl group from acyl-phosphate (acyl-PO(4)) to glycerol-3-phosphate (G3P) to form lysophosphatidic acid (LPA). This enzyme utilizes acyl-phosphate as fatty acyl donor, but not acyl-CoA or acyl-ACP. In Rhodopseudomonas palustris (strain HaA2), this protein is Glycerol-3-phosphate acyltransferase.